Here is a 1186-residue protein sequence, read N- to C-terminus: Chromosome partition protein Smc (1186 aa).

32–39 (PNGSGKSN) contributes to the ATP binding site. Coiled-coil stretches lie at residues 167–206 (VLKY…EPLK) and 259–481 (SSAI…QAYQ). One can recognise an SMC hinge domain in the interval 519–637 (GIRGAVLELI…EDLKGANELA (119 aa)). 3 coiled-coil regions span residues 672–864 (LLGR…MSSS), 893–943 (RDQR…NLLQ), and 990–1029 (SIDE…DEEM).

Belongs to the SMC family. As to quaternary structure, homodimer.

The protein resides in the cytoplasm. Required for chromosome condensation and partitioning. The polypeptide is Chromosome partition protein Smc (Bacillus subtilis (strain 168)).